The sequence spans 513 residues: Putative fucosyltransferase-like protein (513 aa).

Residues 1 to 34 (MGVFSNLRGPRAGATHDEFPATNGSPSSSSSPSS) form a disordered region. The Cytoplasmic portion of the chain corresponds to 1–39 (MGVFSNLRGPRAGATHDEFPATNGSPSSSSSPSSSIKRK). Positions 25–34 (SPSSSSSPSS) are enriched in low complexity. Residues 40–60 (LSNLLPLCVALVVIAEIGFLG) traverse the membrane as a helical; Signal-anchor for type II membrane protein segment. Topologically, residues 61 to 513 (RLDKVALVDT…PCAKFEVVFV (453 aa)) are lumenal. Residues N348 and N493 are each glycosylated (N-linked (GlcNAc...) asparagine).

The protein belongs to the glycosyltransferase 10 family.

It localises to the golgi apparatus. It is found in the golgi stack membrane. The protein operates within protein modification; protein glycosylation. Functionally, may be involved in cell wall biosynthesis. May act as a fucosyltransferase. This chain is Putative fucosyltransferase-like protein (FUT12), found in Arabidopsis thaliana (Mouse-ear cress).